Here is a 675-residue protein sequence, read N- to C-terminus: Acyl-coenzyme A oxidase 3, peroxisomal (675 aa).

Residues 1–34 (MSDNRALRRAHVLANHILQSNPPSSNPSLSRELC) constitute a peroxisome transit peptide. 442 to 457 (AVGGQGVKTENLVGQL) lines the FAD pocket.

The protein belongs to the acyl-CoA oxidase family. The cofactor is FAD. As to expression, most abundant in flowers and senescing rosette leaves. Lower expression in hypocotyls, stems, young rosette leaves, cotyledons, cauline leaves and root tip of young seedlings.

Its subcellular location is the peroxisome. It carries out the reaction a 2,3-saturated acyl-CoA + O2 = a (2E)-enoyl-CoA + H2O2. The protein operates within lipid metabolism; peroxisomal fatty acid beta-oxidation. Catalyzes the desaturation of medium-chain acyl-CoAs to 2-trans-enoyl-CoAs. Active on C8:0- to C14:0-CoA with a maximal activity on C12:0-CoA. The sequence is that of Acyl-coenzyme A oxidase 3, peroxisomal (ACX3) from Arabidopsis thaliana (Mouse-ear cress).